A 75-amino-acid polypeptide reads, in one-letter code: Guanine nucleotide-binding protein G(I)/G(S)/G(O) subunit gamma-3 (75 aa).

Residue Thr-5 is modified to Phosphothreonine. Ser-9 carries the post-translational modification Phosphoserine. Thr-10 is modified (phosphothreonine). Residue Ser-12 is modified to Phosphoserine. Position 72 is a cysteine methyl ester (Cys-72). A lipid anchor (S-geranylgeranyl cysteine) is attached at Cys-72. Residues Ala-73–Leu-75 constitute a propeptide, removed in mature form.

The protein belongs to the G protein gamma family. G proteins are composed of 3 units, alpha, beta and gamma. Forms a complex with GNAO1 and GNB1. Interacts with SCN8A. Abundantly expressed in brain. Low levels in testis.

The protein resides in the cell membrane. Its function is as follows. Guanine nucleotide-binding proteins (G proteins) are involved as a modulator or transducer in various transmembrane signaling systems. The beta and gamma chains are required for the GTPase activity, for replacement of GDP by GTP, and for G protein-effector interaction. The polypeptide is Guanine nucleotide-binding protein G(I)/G(S)/G(O) subunit gamma-3 (GNG3) (Bos taurus (Bovine)).